The chain runs to 950 residues: Leucine--tRNA ligase (950 aa).

A 'HIGH' region motif is present at residues 41 to 52 (PYPSGDGLHVGH). The 'KMSKS' region signature appears at 718 to 722 (KMSKS). Lys-721 lines the ATP pocket.

Belongs to the class-I aminoacyl-tRNA synthetase family.

It is found in the cytoplasm. The catalysed reaction is tRNA(Leu) + L-leucine + ATP = L-leucyl-tRNA(Leu) + AMP + diphosphate. The chain is Leucine--tRNA ligase from Rhodopirellula baltica (strain DSM 10527 / NCIMB 13988 / SH1).